The primary structure comprises 456 residues: Arginine biosynthesis bifunctional protein ArgJ, mitochondrial (456 aa).

6 residues coordinate substrate: threonine 184, lysine 213, threonine 224, glutamate 311, asparagine 451, and threonine 456. Threonine 224 functions as the Nucleophile in the catalytic mechanism.

Belongs to the ArgJ family. In terms of assembly, heterodimer of an alpha and a beta chain. The alpha and beta chains are autoproteolytically processed from a single precursor protein within the mitochondrion.

It localises to the mitochondrion matrix. It carries out the reaction N(2)-acetyl-L-ornithine + L-glutamate = N-acetyl-L-glutamate + L-ornithine. The catalysed reaction is L-glutamate + acetyl-CoA = N-acetyl-L-glutamate + CoA + H(+). The protein operates within amino-acid biosynthesis; L-arginine biosynthesis; L-ornithine and N-acetyl-L-glutamate from L-glutamate and N(2)-acetyl-L-ornithine (cyclic): step 1/1. Its pathway is amino-acid biosynthesis; L-arginine biosynthesis; N(2)-acetyl-L-ornithine from L-glutamate: step 1/4. Its function is as follows. Catalyzes two activities which are involved in the cyclic version of arginine biosynthesis: the synthesis of acetylglutamate from glutamate and acetyl-CoA, and of ornithine by transacetylation between acetylornithine and glutamate. This Aspergillus oryzae (strain ATCC 42149 / RIB 40) (Yellow koji mold) protein is Arginine biosynthesis bifunctional protein ArgJ, mitochondrial.